The primary structure comprises 373 residues: Putative glutamate--cysteine ligase 2 (373 aa).

The protein belongs to the glutamate--cysteine ligase type 2 family. YbdK subfamily. Homodimer.

It catalyses the reaction L-cysteine + L-glutamate + ATP = gamma-L-glutamyl-L-cysteine + ADP + phosphate + H(+). Its function is as follows. ATP-dependent carboxylate-amine ligase which exhibits weak glutamate--cysteine ligase activity. This chain is Putative glutamate--cysteine ligase 2, found in Enterobacter sp. (strain 638).